The following is a 228-amino-acid chain: Acyl-protein thioesterase 1 (228 aa).

Active-site charge relay system residues include serine 119, aspartate 174, and histidine 208.

The protein belongs to the AB hydrolase superfamily. AB hydrolase 2 family.

The protein localises to the cytoplasm. It localises to the nucleus. It catalyses the reaction S-hexadecanoyl-L-cysteinyl-[protein] + H2O = L-cysteinyl-[protein] + hexadecanoate + H(+). In terms of biological role, hydrolyzes fatty acids from S-acylated cysteine residues in proteins with a strong preference for palmitoylated G-alpha proteins over other acyl substrates. Mediates the deacylation of G-alpha proteins such as GPA1 in vivo, but has weak or no activity toward palmitoylated Ras proteins. Has weak lysophospholipase activity in vitro; however such activity may not exist in vivo. The polypeptide is Acyl-protein thioesterase 1 (Kluyveromyces lactis (strain ATCC 8585 / CBS 2359 / DSM 70799 / NBRC 1267 / NRRL Y-1140 / WM37) (Yeast)).